Consider the following 191-residue polypeptide: Molybdenum cofactor guanylyltransferase (191 aa).

Residues 13–15 (LAG), lysine 26, aspartate 72, and aspartate 102 each bind GTP. Residue aspartate 102 coordinates Mg(2+).

The protein belongs to the MobA family. Monomer. Requires Mg(2+) as cofactor.

Its subcellular location is the cytoplasm. The enzyme catalyses Mo-molybdopterin + GTP + H(+) = Mo-molybdopterin guanine dinucleotide + diphosphate. Its function is as follows. Transfers a GMP moiety from GTP to Mo-molybdopterin (Mo-MPT) cofactor (Moco or molybdenum cofactor) to form Mo-molybdopterin guanine dinucleotide (Mo-MGD) cofactor. In Pseudomonas putida (strain ATCC 47054 / DSM 6125 / CFBP 8728 / NCIMB 11950 / KT2440), this protein is Molybdenum cofactor guanylyltransferase.